We begin with the raw amino-acid sequence, 442 residues long: ATP-dependent protease ATPase subunit HslU (442 aa).

Residues I18, 60-65, D255, E320, and R392 contribute to the ATP site; that span reads GVGKTE.

This sequence belongs to the ClpX chaperone family. HslU subfamily. As to quaternary structure, a double ring-shaped homohexamer of HslV is capped on each side by a ring-shaped HslU homohexamer. The assembly of the HslU/HslV complex is dependent on binding of ATP.

It localises to the cytoplasm. Functionally, ATPase subunit of a proteasome-like degradation complex; this subunit has chaperone activity. The binding of ATP and its subsequent hydrolysis by HslU are essential for unfolding of protein substrates subsequently hydrolyzed by HslV. HslU recognizes the N-terminal part of its protein substrates and unfolds these before they are guided to HslV for hydrolysis. The polypeptide is ATP-dependent protease ATPase subunit HslU (Aeromonas salmonicida (strain A449)).